Consider the following 627-residue polypeptide: 5-aminolevulinate synthase, non-specific, mitochondrial (627 aa).

The transit peptide at M1 to S58 directs the protein to the mitochondrion. Substrate is bound by residues R204, S321, and K340. Residues S373, H401, and T429 each coordinate pyridoxal 5'-phosphate. K432 is an active-site residue. N6-(pyridoxal phosphate)lysine is present on K432. Pyridoxal 5'-phosphate contacts are provided by T461 and T462. Position 549 (T549) interacts with substrate.

Belongs to the class-II pyridoxal-phosphate-dependent aminotransferase family. As to quaternary structure, homodimer. The cofactor is pyridoxal 5'-phosphate.

Its subcellular location is the mitochondrion inner membrane. It catalyses the reaction succinyl-CoA + glycine + H(+) = 5-aminolevulinate + CO2 + CoA. Its pathway is porphyrin-containing compound metabolism; protoporphyrin-IX biosynthesis; 5-aminolevulinate from glycine: step 1/1. Functionally, catalyzes the pyridoxal 5'-phosphate (PLP)-dependent condensation of succinyl-CoA and glycine to form aminolevulinic acid (ALA), with CoA and CO2 as by-products. The chain is 5-aminolevulinate synthase, non-specific, mitochondrial (alas1) from Opsanus tau (Oyster toadfish).